We begin with the raw amino-acid sequence, 313 residues long: Homoserine O-succinyltransferase (313 aa).

The active-site Acyl-thioester intermediate is the Cys-142. Residues Lys-163 and Ser-192 each contribute to the substrate site. His-235 functions as the Proton acceptor in the catalytic mechanism. Residue Glu-237 is part of the active site. Arg-249 contributes to the substrate binding site.

The protein belongs to the MetA family.

It localises to the cytoplasm. The enzyme catalyses L-homoserine + succinyl-CoA = O-succinyl-L-homoserine + CoA. The protein operates within amino-acid biosynthesis; L-methionine biosynthesis via de novo pathway; O-succinyl-L-homoserine from L-homoserine: step 1/1. Functionally, transfers a succinyl group from succinyl-CoA to L-homoserine, forming succinyl-L-homoserine. This chain is Homoserine O-succinyltransferase, found in Shewanella baltica (strain OS223).